We begin with the raw amino-acid sequence, 767 residues long: RNA cytosine C(5)-methyltransferase NSUN2 (767 aa).

The tract at residues M1 to G36 is disordered. Residue K46 forms a Glycyl lysine isopeptide (Lys-Gly) (interchain with G-Cter in SUMO2) linkage. S139 bears the Phosphoserine; by AURKB mark. Residues C184–K190, D215, D242, and D268 each bind S-adenosyl-L-methionine. C321 functions as the Nucleophile in the catalytic mechanism. The interval N436–D481 is disordered. The residue at position 456 (S456) is a Phosphoserine. Basic and acidic residues predominate over residues T461–K470. Glycyl lysine isopeptide (Lys-Gly) (interchain with G-Cter in SUMO2) cross-links involve residues K464 and K470. S473 carries the post-translational modification Phosphoserine. Glycyl lysine isopeptide (Lys-Gly) (interchain with G-Cter in SUMO2) cross-links involve residues K511 and K516. K586 is modified (N6-acetyllysine; alternate). K586 carries the post-translational modification N6-malonyllysine; alternate. A Glycyl lysine isopeptide (Lys-Gly) (interchain with G-Cter in SUMO2); alternate cross-link involves residue K586. S593 is subject to Phosphoserine. Glycyl lysine isopeptide (Lys-Gly) (interchain with G-Cter in SUMO2) cross-links involve residues K640, K654, and K660. A Phosphothreonine modification is found at T718. A compositionally biased stretch (polar residues) spans N719–N730. The disordered stretch occupies residues N719–R767. Phosphoserine occurs at positions 724, 743, and 751.

It belongs to the class I-like SAM-binding methyltransferase superfamily. RsmB/NOP family. TRM4 subfamily. Interacts with NPM1 and NCL during interphase; interaction is disrupted following phosphorylation at Ser-139. In terms of processing, phosphorylated at Ser-139 by AURKB during mitosis, leading to abolish methyltransferase activity and the interaction with NPM1. In terms of tissue distribution, expressed in adult and fetal brain and in lymphoblastoid cells.

It is found in the nucleus. The protein localises to the nucleolus. Its subcellular location is the cytoplasm. The protein resides in the mitochondrion. It localises to the cytoskeleton. It is found in the spindle. The protein localises to the secreted. Its subcellular location is the extracellular exosome. The catalysed reaction is cytidine(48) in tRNA + S-adenosyl-L-methionine = 5-methylcytidine(48) in tRNA + S-adenosyl-L-homocysteine + H(+). The enzyme catalyses cytidine(49) in tRNA + S-adenosyl-L-methionine = 5-methylcytidine(49) in tRNA + S-adenosyl-L-homocysteine + H(+). It carries out the reaction cytidine(50) in tRNA + S-adenosyl-L-methionine = 5-methylcytidine(50) in tRNA + S-adenosyl-L-homocysteine + H(+). It catalyses the reaction cytidine(34) in tRNA precursor + S-adenosyl-L-methionine = 5-methylcytidine(34) in tRNA precursor + S-adenosyl-L-homocysteine + H(+). The catalysed reaction is a cytidine in mRNA + S-adenosyl-L-methionine = a 5-methylcytidine in mRNA + S-adenosyl-L-homocysteine + H(+). Inhibited by magnesium ions. Its function is as follows. RNA cytosine C(5)-methyltransferase that methylates cytosine to 5-methylcytosine (m5C) in various RNAs, such as tRNAs, mRNAs and some long non-coding RNAs (lncRNAs). Involved in various processes, such as epidermal stem cell differentiation, testis differentiation and maternal to zygotic transition during early development: acts by increasing protein synthesis; cytosine C(5)-methylation promoting tRNA stability and preventing mRNA decay. Methylates cytosine to 5-methylcytosine (m5C) at positions 34 and 48 of intron-containing tRNA(Leu)(CAA) precursors, and at positions 48, 49 and 50 of tRNA(Gly)(GCC) precursors. tRNA methylation is required generation of RNA fragments derived from tRNAs (tRFs). Also mediates C(5)-methylation of mitochondrial tRNAs. Catalyzes cytosine C(5)-methylation of mRNAs, leading to stabilize them and prevent mRNA decay: mRNA stabilization involves YBX1 that specifically recognizes and binds m5C-modified transcripts. Cytosine C(5)-methylation of mRNAs also regulates mRNA export: methylated transcripts are specifically recognized by THOC4/ALYREF, which mediates mRNA nucleo-cytoplasmic shuttling. Also mediates cytosine C(5)-methylation of non-coding RNAs, such as vault RNAs (vtRNAs), promoting their processing into regulatory small RNAs. Cytosine C(5)-methylation of vtRNA VTRNA1.1 promotes its processing into small-vault RNA4 (svRNA4) and regulates epidermal differentiation. May act downstream of Myc to regulate epidermal cell growth and proliferation. Required for proper spindle assembly and chromosome segregation, independently of its methyltransferase activity. In Homo sapiens (Human), this protein is RNA cytosine C(5)-methyltransferase NSUN2.